Here is a 393-residue protein sequence, read N- to C-terminus: MEFDEIKDALNALKRGESIIVVDDEDRENEGDLVAITQWMNDNTINFMAKEGRGLICAPISKDLALKFNLMPMVEHNTDGFGTNFTVSIDHATTSTGISAFDRMATARALINPESTPEDFHKPGHLFPLIAKENGVLERTGHTEAAVDLAKLTKAAPAGVICEIMNEDGTMAKGEQLEAFKHQHGLKMITIESLVNYQKDKDTSVELKAKVNMPTDHGAFEMYGFESSLTKEEIVVLAKGEPRVTENVRIHSACLTGDIFHSQRCDCGAQLESAMKYINEHGGMIIYLPQEGRGIGLINKLRAYELIEQGHDTVTANLALGFDEDLRDYHIAAQILNYFNVQQVNLLSNNPKKFEGLSEYGIKVADRTPIIVAENEHNHDYMNTKKIKMGHLI.

The tract at residues 1–200 is DHBP synthase; the sequence is MEFDEIKDAL…IESLVNYQKD (200 aa). D-ribulose 5-phosphate-binding positions include 27–28, aspartate 32, 139–143, and glutamate 163; these read RE and RTGHT. Glutamate 28 contacts Mg(2+). Position 142 (histidine 142) interacts with Mg(2+). The tract at residues 201–393 is GTP cyclohydrolase II; sequence KDTSVELKAK…TKKIKMGHLI (193 aa). Residue 249–253 coordinates GTP; it reads RIHSA. Positions 254, 265, and 267 each coordinate Zn(2+). GTP contacts are provided by residues glutamine 270, 291 to 293, and threonine 313; that span reads EGR. Aspartate 325 (proton acceptor; for GTP cyclohydrolase activity) is an active-site residue. Arginine 327 acts as the Nucleophile; for GTP cyclohydrolase activity in catalysis. 2 residues coordinate GTP: serine 348 and lysine 353.

This sequence in the N-terminal section; belongs to the DHBP synthase family. In the C-terminal section; belongs to the GTP cyclohydrolase II family. Requires Mg(2+) as cofactor. It depends on Mn(2+) as a cofactor. The cofactor is Zn(2+).

It carries out the reaction D-ribulose 5-phosphate = (2S)-2-hydroxy-3-oxobutyl phosphate + formate + H(+). The enzyme catalyses GTP + 4 H2O = 2,5-diamino-6-hydroxy-4-(5-phosphoribosylamino)-pyrimidine + formate + 2 phosphate + 3 H(+). The protein operates within cofactor biosynthesis; riboflavin biosynthesis; 2-hydroxy-3-oxobutyl phosphate from D-ribulose 5-phosphate: step 1/1. It functions in the pathway cofactor biosynthesis; riboflavin biosynthesis; 5-amino-6-(D-ribitylamino)uracil from GTP: step 1/4. Functionally, catalyzes the conversion of D-ribulose 5-phosphate to formate and 3,4-dihydroxy-2-butanone 4-phosphate. In terms of biological role, catalyzes the conversion of GTP to 2,5-diamino-6-ribosylamino-4(3H)-pyrimidinone 5'-phosphate (DARP), formate and pyrophosphate. This chain is Riboflavin biosynthesis protein RibBA, found in Staphylococcus haemolyticus (strain JCSC1435).